The chain runs to 201 residues: Large ribosomal subunit protein uL4 (201 aa).

Residues 44-71 form a disordered region; it reads RAQKTRAEVSGSGKKPWRQKGTGRARSG.

It belongs to the universal ribosomal protein uL4 family. As to quaternary structure, part of the 50S ribosomal subunit.

In terms of biological role, one of the primary rRNA binding proteins, this protein initially binds near the 5'-end of the 23S rRNA. It is important during the early stages of 50S assembly. It makes multiple contacts with different domains of the 23S rRNA in the assembled 50S subunit and ribosome. Forms part of the polypeptide exit tunnel. This Proteus mirabilis (strain HI4320) protein is Large ribosomal subunit protein uL4.